A 237-amino-acid chain; its full sequence is UPF0174 protein YaaW (237 aa).

The protein belongs to the UPF0174 family.

In Escherichia coli O157:H7, this protein is UPF0174 protein YaaW.